The primary structure comprises 358 residues: MSLQSLKINFAEWLLLKVKYPSQYWLGAADQPVKAAAHQKKIILTLLPSHDNLGDHAIAYASKAFLEQEYPDFDIVEVDMKDIYKSAKSLIRSRHPEDMVFIIGGGNMGDLYRYEEWTRRFIIKTFHDYRVVQLPATAHFSDTKKGRKELKRAQKIYNAHPGLLLMARDETTYQFMKQHFQEKTILKQPDMVLYLDRSKAPAEREGVYMCLREDQESVLQEEQRNRVKAALCEEFGEIKSFTTTIGRRVSRDTREHELEALWSKLQSAEAVVTDRLHGMIFCALTGTPCVVIRSFDHKVMEGYQWLKDIPFMKLIEHPEPERVTAAVNELLTKETSRAGFPRDVYFKGLRDKISGEAQ.

It belongs to the polysaccharide pyruvyl transferase family.

May be involved in the production of the exopolysaccharide (EPS) component of the extracellular matrix during biofilm formation. EPS is responsible for the adhesion of chains of cells into bundles. The chain is Putative pyruvyl transferase EpsI (epsI) from Bacillus subtilis (strain 168).